The following is a 91-amino-acid chain: Non-specific lipid-transfer protein 1 (91 aa).

4 disulfides stabilise this stretch: cysteine 3–cysteine 50, cysteine 13–cysteine 27, cysteine 28–cysteine 73, and cysteine 48–cysteine 87.

This sequence belongs to the plant LTP family.

Plant non-specific lipid-transfer proteins transfer phospholipids as well as galactolipids across membranes. May play a role in wax or cutin deposition in the cell walls of expanding epidermal cells and certain secretory tissues. This is Non-specific lipid-transfer protein 1 from Morus nigra (Black mulberry).